The chain runs to 138 residues: Translation initiation factor 2 subunit beta (138 aa).

The protein belongs to the eIF-2-beta/eIF-5 family. Heterotrimer composed of an alpha, a beta and a gamma chain.

In terms of biological role, eIF-2 functions in the early steps of protein synthesis by forming a ternary complex with GTP and initiator tRNA. The protein is Translation initiation factor 2 subunit beta of Methanopyrus kandleri (strain AV19 / DSM 6324 / JCM 9639 / NBRC 100938).